Reading from the N-terminus, the 391-residue chain is Na(+)/H(+) antiporter NhaA (391 aa).

Transmembrane regions (helical) follow at residues 14-34 (GGII…LGAT), 59-79 (MLLW…GLEV), 95-115 (AFPV…YLAF), 125-145 (GWAI…ALLG), 154-174 (IFLM…IALF), 180-200 (SILS…LNIF), 219-239 (VLKS…FIPL), 254-274 (VLHP…NAGV), 292-312 (IIAG…WLAL), 328-348 (IMAV…ISTL), and 357-377 (LIVW…FVGY).

The protein belongs to the NhaA Na(+)/H(+) (TC 2.A.33) antiporter family.

The protein localises to the cell inner membrane. It carries out the reaction Na(+)(in) + 2 H(+)(out) = Na(+)(out) + 2 H(+)(in). Na(+)/H(+) antiporter that extrudes sodium in exchange for external protons. This Enterobacter sp. (strain 638) protein is Na(+)/H(+) antiporter NhaA.